Consider the following 460-residue polypeptide: Putative type II methyltransferase M.OihORF3336P (460 aa).

Residues 15–458 (PEVVDLFSGC…EAMKKNIQGG (444 aa)) form the SAM-dependent MTase C5-type domain. Residue C97 is part of the active site.

This sequence belongs to the class I-like SAM-binding methyltransferase superfamily. C5-methyltransferase family.

The enzyme catalyses a 2'-deoxycytidine in DNA + S-adenosyl-L-methionine = a 5-methyl-2'-deoxycytidine in DNA + S-adenosyl-L-homocysteine + H(+). A methylase, recognizes the double-stranded sequence 5'-ACCGGT-3', methylates C-? on both strands. No endonuclease has been identified for this methylase. The polypeptide is Putative type II methyltransferase M.OihORF3336P (Oceanobacillus iheyensis (strain DSM 14371 / CIP 107618 / JCM 11309 / KCTC 3954 / HTE831)).